The following is a 149-amino-acid chain: Large ribosomal subunit protein bL9 (149 aa).

It belongs to the bacterial ribosomal protein bL9 family.

In terms of biological role, binds to the 23S rRNA. This is Large ribosomal subunit protein bL9 from Enterobacter sp. (strain 638).